A 114-amino-acid chain; its full sequence is Iron-sulfur cluster insertion protein ErpA (114 aa).

The iron-sulfur cluster site is built by cysteine 42, cysteine 106, and cysteine 108.

Belongs to the HesB/IscA family. As to quaternary structure, homodimer. Iron-sulfur cluster is required as a cofactor.

Functionally, required for insertion of 4Fe-4S clusters for at least IspG. The protein is Iron-sulfur cluster insertion protein ErpA of Serratia proteamaculans (strain 568).